We begin with the raw amino-acid sequence, 125 residues long: uncharacterized protein (125 aa).

Residues 50-73 (QTSDFSDESSRSDSSSVTNENEVS) form a disordered region.

This is an uncharacterized protein from Microplitis demolitor (Parasitoid wasp).